The primary structure comprises 118 residues: Small ribosomal subunit protein uS13 (118 aa).

Positions 94 to 118 (SLPVRGQRTKTNARTRKGPRKAIKK) are disordered.

The protein belongs to the universal ribosomal protein uS13 family. As to quaternary structure, part of the 30S ribosomal subunit. Forms a loose heterodimer with protein S19. Forms two bridges to the 50S subunit in the 70S ribosome.

Its function is as follows. Located at the top of the head of the 30S subunit, it contacts several helices of the 16S rRNA. In the 70S ribosome it contacts the 23S rRNA (bridge B1a) and protein L5 of the 50S subunit (bridge B1b), connecting the 2 subunits; these bridges are implicated in subunit movement. Contacts the tRNAs in the A and P-sites. In Aeromonas hydrophila subsp. hydrophila (strain ATCC 7966 / DSM 30187 / BCRC 13018 / CCUG 14551 / JCM 1027 / KCTC 2358 / NCIMB 9240 / NCTC 8049), this protein is Small ribosomal subunit protein uS13.